The following is a 155-amino-acid chain: Ribosome maturation factor RimP (155 aa).

Belongs to the RimP family.

The protein resides in the cytoplasm. Functionally, required for maturation of 30S ribosomal subunits. This Lachnoclostridium phytofermentans (strain ATCC 700394 / DSM 18823 / ISDg) (Clostridium phytofermentans) protein is Ribosome maturation factor RimP.